The following is a 445-amino-acid chain: MREIVHLQTGQCGNQIGAKFWEVVSDEHGIEADGLYKGTNDQQLERISVYYNEIGANKYVPRAILVDLEPGTMDSVRSGPLGGLFRPDNFVFGQSGAGNNWAKGHYTEGAELVDAVLDVVRKEAEGTDCLQGFQITHSLGGGTGAGMGTLLISKIREEYPDRMMCTFSVVPSPKVSDTVVEPYNATLSVHQLVENSDETFCIDNEALYDICFRTLKLSTPTYGDLNHLVSFVMSGITTSLRFPGQLNSDLRKLAVNLVPFPRLHFFMTGFAPLTARGSQQYRAVTVPELTQQMFDAKNMMAASDPRHGRYLTVAAMFRGKVSMKEVEEQMQNVQNKNSAYFVEWIPNNVLASQCDIAPRGLRMSVTFLGNSTAIQELFKRVSDQFTAMFKRKAFLHWYTQEGMDEMEFTEAESNMQDLVAEYQQYQDATVEEEGEYEEEVIEDQE.

The GTP site is built by Gln11, Glu69, Ser138, Gly142, Thr143, Gly144, Asn204, and Asn226. A Mg(2+)-binding site is contributed by Glu69.

Belongs to the tubulin family. In terms of assembly, dimer of alpha and beta chains. A typical microtubule is a hollow water-filled tube with an outer diameter of 25 nm and an inner diameter of 15 nM. Alpha-beta heterodimers associate head-to-tail to form protofilaments running lengthwise along the microtubule wall with the beta-tubulin subunit facing the microtubule plus end conferring a structural polarity. Microtubules usually have 13 protofilaments but different protofilament numbers can be found in some organisms and specialized cells. Requires Mg(2+) as cofactor.

It localises to the cytoplasm. The protein resides in the cytoskeleton. In terms of biological role, tubulin is the major constituent of microtubules, a cylinder consisting of laterally associated linear protofilaments composed of alpha- and beta-tubulin heterodimers. Microtubules grow by the addition of GTP-tubulin dimers to the microtubule end, where a stabilizing cap forms. Below the cap, tubulin dimers are in GDP-bound state, owing to GTPase activity of alpha-tubulin. In Schizophyllum commune (Split gill fungus), this protein is Tubulin beta chain (TUB-2).